The chain runs to 322 residues: Lipoyl synthase 2 (322 aa).

The disordered stretch occupies residues 1–36 (MKVILDLLNNDPRTTQRTERPRHPEKANRPDTPMES). Over residues 14 to 34 (TTQRTERPRHPEKANRPDTPM) the composition is skewed to basic and acidic residues. [4Fe-4S] cluster is bound by residues cysteine 67, cysteine 72, cysteine 78, cysteine 93, cysteine 97, cysteine 100, and serine 306. The region spanning 79–295 (WAKKHATFMI…EKTAYAKGFL (217 aa)) is the Radical SAM core domain.

It belongs to the radical SAM superfamily. Lipoyl synthase family. [4Fe-4S] cluster is required as a cofactor.

The protein resides in the cytoplasm. It carries out the reaction [[Fe-S] cluster scaffold protein carrying a second [4Fe-4S](2+) cluster] + N(6)-octanoyl-L-lysyl-[protein] + 2 oxidized [2Fe-2S]-[ferredoxin] + 2 S-adenosyl-L-methionine + 4 H(+) = [[Fe-S] cluster scaffold protein] + N(6)-[(R)-dihydrolipoyl]-L-lysyl-[protein] + 4 Fe(3+) + 2 hydrogen sulfide + 2 5'-deoxyadenosine + 2 L-methionine + 2 reduced [2Fe-2S]-[ferredoxin]. It participates in protein modification; protein lipoylation via endogenous pathway; protein N(6)-(lipoyl)lysine from octanoyl-[acyl-carrier-protein]: step 2/2. Its function is as follows. Catalyzes the radical-mediated insertion of two sulfur atoms into the C-6 and C-8 positions of the octanoyl moiety bound to the lipoyl domains of lipoate-dependent enzymes, thereby converting the octanoylated domains into lipoylated derivatives. The polypeptide is Lipoyl synthase 2 (Bradyrhizobium diazoefficiens (strain JCM 10833 / BCRC 13528 / IAM 13628 / NBRC 14792 / USDA 110)).